A 102-amino-acid chain; its full sequence is Small ribosomal subunit protein uS10 (102 aa).

This sequence belongs to the universal ribosomal protein uS10 family. Part of the 30S ribosomal subunit.

Involved in the binding of tRNA to the ribosomes. The sequence is that of Small ribosomal subunit protein uS10 from Lactobacillus gasseri (strain ATCC 33323 / DSM 20243 / BCRC 14619 / CIP 102991 / JCM 1131 / KCTC 3163 / NCIMB 11718 / NCTC 13722 / AM63).